The chain runs to 251 residues: Sugar fermentation stimulation protein homolog (251 aa).

The protein belongs to the SfsA family.

The sequence is that of Sugar fermentation stimulation protein homolog from Symbiobacterium thermophilum (strain DSM 24528 / JCM 14929 / IAM 14863 / T).